A 2603-amino-acid polypeptide reads, in one-letter code: Squalestatin tetraketide synthase (2603 aa).

The region spanning 29–455 is the Ketosynthase family 3 (KS3) domain; it reads TIPIAIIGMS…GANAHVILES (427 aa). Catalysis depends on for beta-ketoacyl synthase activity residues Cys-202, His-337, and His-377. The tract at residues 463-512 is disordered; the sequence is IANGSGRSNGTGNGHNGANGTTNGHNGTNGTTNGHFDATQATNGHYGTDE. Residues 469 to 479 show a composition bias toward gly residues; sequence RSNGTGNGHNG. A compositionally biased stretch (low complexity) spans 480–497; that stretch reads ANGTTNGHNGTNGTTNGH. A malonyl-CoA:ACP transacylase (MAT) domain region spans residues 608–931; the sequence is VFTGQGAQWF…PYISCLLRGQ (324 aa). The tract at residues 1000-1138 is N-terminal hotdog fold; sequence HDLLGSLIVG…GRITIEFDTS (139 aa). The PKS/mFAS DH domain occupies 1000 to 1314; the sequence is HDLLGSLIVG…NQSVGQMAPQ (315 aa). The tract at residues 1000–1314 is dehydratase (DH) domain; that stretch reads HDLLGSLIVG…NQSVGQMAPQ (315 aa). The active-site Proton acceptor; for dehydratase activity is the His-1032. The interval 1157–1314 is C-terminal hotdog fold; the sequence is LMRSVDPSNL…NQSVGQMAPQ (158 aa). The active-site Proton donor; for dehydratase activity is the Asp-1223. A methyltransferase (CMet) domain region spans residues 1465-1665; sequence LYRYYTDAIK…GLDIELRDCD (201 aa). Residues 1892–2205 form an enoyl reductase (ER) (ER) domain region; that stretch reads GLIDTLQFSK…AGKHMGKIVI (314 aa). The interval 2228–2406 is ketoreductase (KR) domain; the sequence is ASYLIVGGLG…AVSIDLGMVQ (179 aa). The 78-residue stretch at 2516 to 2593 folds into the Carrier domain; sequence EAIDVVGRAI…ALATTVATKS (78 aa). Ser-2553 is subject to O-(pantetheine 4'-phosphoryl)serine.

Its pathway is secondary metabolite biosynthesis. In terms of biological role, highly reducing polyketide synthase (HR-PKS); part of the gene cluster that mediates the biosynthesis of squalestatin S1 (SQS1, also known as zaragozic acid A), a lead compound for the treatment of hyper-cholesterolemia by targeting squalene synthase (SS). Pks1 is responsible for the biosynthesis of the tetraketide sidechain of SQS1. The biosynthesis must involve 3 rounds of chain extension. After the first and second rounds methyl-transfer occurs, and in all rounds of extension the ketoreductase and dehydratase are active. The enoyl reductase and C-MeT are not active in the final round of extension. The chain is Squalestatin tetraketide synthase from Phoma sp. (strain C2932).